Reading from the N-terminus, the 377-residue chain is Modification methylase CviBIII (377 aa).

This sequence belongs to the N(4)/N(6)-methyltransferase family.

It carries out the reaction a 2'-deoxyadenosine in DNA + S-adenosyl-L-methionine = an N(6)-methyl-2'-deoxyadenosine in DNA + S-adenosyl-L-homocysteine + H(+). Its function is as follows. A gamma subtype methylase that recognizes the double-stranded sequence 5'-TCGA-3' and methylates A-4 on both strands. This is Modification methylase CviBIII (CVIBIIIM) from Paramecium bursaria Chlorella virus NC1A (PBCV-NC1A).